A 430-amino-acid polypeptide reads, in one-letter code: UDP-N-acetylglucosamine 1-carboxyvinyltransferase (430 aa).

22–23 (KN) is a binding site for phosphoenolpyruvate. UDP-N-acetyl-alpha-D-glucosamine is bound at residue Arg-102. Cys-126 functions as the Proton donor in the catalytic mechanism. Cys-126 bears the 2-(S-cysteinyl)pyruvic acid O-phosphothioketal mark. UDP-N-acetyl-alpha-D-glucosamine contacts are provided by residues 131–135 (RPVDL), 172–175 (KVSV), Asp-317, and Ile-339.

The protein belongs to the EPSP synthase family. MurA subfamily.

It is found in the cytoplasm. The catalysed reaction is phosphoenolpyruvate + UDP-N-acetyl-alpha-D-glucosamine = UDP-N-acetyl-3-O-(1-carboxyvinyl)-alpha-D-glucosamine + phosphate. It functions in the pathway cell wall biogenesis; peptidoglycan biosynthesis. In terms of biological role, cell wall formation. Adds enolpyruvyl to UDP-N-acetylglucosamine. This chain is UDP-N-acetylglucosamine 1-carboxyvinyltransferase, found in Rhizobium etli (strain ATCC 51251 / DSM 11541 / JCM 21823 / NBRC 15573 / CFN 42).